The chain runs to 277 residues: MENNKTSVDSKSIKTLETKILHGSKSMDSGISLDVSYKMDYPEMGLCIIINNKNFDKNTGMACRSGTDVDAANLRETFTNLKYEVRNKNDLTREEILELMHSVSKEDHSKRSSFICVLLSHGEEGKIFGTNGPVDLKKLTSFFRGDCCRTLTGKPKLFIIQACRGTELDCGIETDSGTEDDMACQKIPVEADFLYAYSTAPGYYSWRNSKDGSWFIQSLCAALKQYVHKLELMHILTRVNRKVAVEFESFSTDSTFHAKKQIPCIVSMLTKELYFYH.

The residue at position 1 (Met-1) is an N-acetylmethionine. 2 consecutive propeptides follow at residues 1-9 (MENNKTSVD) and 10-28 (SKSI…KSMD). At Lys-11 the chain carries N6-acetyllysine. Residue Ser-26 is modified to Phosphoserine. Catalysis depends on residues His-121 and Cys-163. Position 163 is an S-nitrosocysteine; in inhibited form (Cys-163).

It belongs to the peptidase C14A family. As to quaternary structure, heterotetramer that consists of two anti-parallel arranged heterodimers, each one formed by a 17 kDa (p17) and a 12 kDa (p12) subunit. Interacts with BIRC6/bruce. (Microbial infection) Subunit p17 interacts with African swine fever virus (ASFV) inhibitor of apoptosis protein. Post-translationally, cleavage by granzyme B, caspase-6, caspase-8 and caspase-10 generates the two active subunits. Additional processing of the propeptides is likely due to the autocatalytic activity of the activated protease. Active heterodimers between the small subunit of caspase-7 protease and the large subunit of caspase-3 also occur and vice versa. In terms of processing, S-nitrosylated on its catalytic site cysteine in unstimulated cell lines and denitrosylated upon activation of the Fas apoptotic pathway, associated with an increase in intracellular caspase activity. Fas therefore activates caspase-3 not only by inducing the cleavage of the caspase zymogen to its active subunits, but also by stimulating the denitrosylation of its active site thiol. Ubiquitinated by BIRC6; this activity is inhibited by DIABLO/SMAC.

It is found in the cytoplasm. The enzyme catalyses Strict requirement for an Asp residue at positions P1 and P4. It has a preferred cleavage sequence of Asp-Xaa-Xaa-Asp-|- with a hydrophobic amino-acid residue at P2 and a hydrophilic amino-acid residue at P3, although Val or Ala are also accepted at this position.. Inhibited by BIRC6; following inhibition of BIRC6-caspase binding by DIABLO/SMAC, BIRC6 is subjected to caspase cleavage, leading to an increase in active caspases. In terms of biological role, involved in the activation cascade of caspases responsible for apoptosis execution. At the onset of apoptosis, it proteolytically cleaves poly(ADP-ribose) polymerase PARP1 at a '216-Asp-|-Gly-217' bond. Cleaves and activates sterol regulatory element binding proteins (SREBPs) between the basic helix-loop-helix leucine zipper domain and the membrane attachment domain. Cleaves and activates caspase-6, -7 and -9 (CASP6, CASP7 and CASP9, respectively). Cleaves and inactivates interleukin-18 (IL18). Triggers cell adhesion in sympathetic neurons through RET cleavage. Cleaves IL-1 beta between an Asp and an Ala, releasing the mature cytokine which is involved in a variety of inflammatory processes. Cleaves and inhibits serine/threonine-protein kinase AKT1 in response to oxidative stress. Acts as an inhibitor of type I interferon production during virus-induced apoptosis by mediating cleavage of antiviral proteins CGAS, IRF3 and MAVS, thereby preventing cytokine overproduction. Also involved in pyroptosis by mediating cleavage and activation of gasdermin-E (GSDME). Cleaves XRCC4 and phospholipid scramblase proteins XKR4, XKR8 and XKR9, leading to promote phosphatidylserine exposure on apoptotic cell surface. Cleaves BIRC6 following inhibition of BIRC6-caspase binding by DIABLO/SMAC. In Sus scrofa (Pig), this protein is Caspase-3 (CASP3).